Consider the following 588-residue polypeptide: L-fucose isomerase (588 aa).

Catalysis depends on proton acceptor residues E335 and D359. Mn(2+) contacts are provided by E335, D359, and H525.

The protein belongs to the L-fucose isomerase family. Mn(2+) is required as a cofactor.

The protein localises to the cytoplasm. The catalysed reaction is L-fucose = L-fuculose. It participates in carbohydrate degradation; L-fucose degradation; L-lactaldehyde and glycerone phosphate from L-fucose: step 1/3. Converts the aldose L-fucose into the corresponding ketose L-fuculose. The protein is L-fucose isomerase of Streptococcus pneumoniae (strain Hungary19A-6).